Here is a 322-residue protein sequence, read N- to C-terminus: Protein-L-isoaspartate O-methyltransferase (322 aa).

A disordered region spans residues 1–101 (MSGERAKRFP…AKQGDRSAAP (101 aa)). Over residues 14–29 (EDLKREPRKPEGRVAE) the composition is skewed to basic and acidic residues. 2 stretches are compositionally biased toward low complexity: residues 33–51 (AGDAARQRLTAAAAVPAAA) and 67–91 (AANPARAKQHAPAAPGAAKRAPQGG). S170 is an active-site residue.

This sequence belongs to the methyltransferase superfamily. L-isoaspartyl/D-aspartyl protein methyltransferase family.

Its subcellular location is the cytoplasm. The catalysed reaction is [protein]-L-isoaspartate + S-adenosyl-L-methionine = [protein]-L-isoaspartate alpha-methyl ester + S-adenosyl-L-homocysteine. Functionally, catalyzes the methyl esterification of L-isoaspartyl residues in peptides and proteins that result from spontaneous decomposition of normal L-aspartyl and L-asparaginyl residues. It plays a role in the repair and/or degradation of damaged proteins. In Burkholderia pseudomallei (strain 668), this protein is Protein-L-isoaspartate O-methyltransferase.